The sequence spans 242 residues: Intraflagellar transport-associated protein (242 aa).

The residue at position 57 (S57) is a Phosphoserine.

As to quaternary structure, interacts with IFT122; the interaction associates IFTAP with IFT-A complex.

Seems to play a role in ciliary BBSome localization, maybe through interaction with IFT-A complex. In Bos taurus (Bovine), this protein is Intraflagellar transport-associated protein (IFTAP).